A 225-amino-acid polypeptide reads, in one-letter code: Thymidylate kinase (225 aa).

Residue 10–17 (GPEGAGKT) coordinates ATP.

It belongs to the thymidylate kinase family.

It catalyses the reaction dTMP + ATP = dTDP + ADP. Its function is as follows. Phosphorylation of dTMP to form dTDP in both de novo and salvage pathways of dTTP synthesis. This Geobacillus thermodenitrificans (strain NG80-2) protein is Thymidylate kinase.